Consider the following 872-residue polypeptide: Alanine--tRNA ligase (872 aa).

Zn(2+) is bound by residues His-567, His-571, Cys-669, and His-673.

The protein belongs to the class-II aminoacyl-tRNA synthetase family. Requires Zn(2+) as cofactor.

The protein resides in the cytoplasm. It carries out the reaction tRNA(Ala) + L-alanine + ATP = L-alanyl-tRNA(Ala) + AMP + diphosphate. Functionally, catalyzes the attachment of alanine to tRNA(Ala) in a two-step reaction: alanine is first activated by ATP to form Ala-AMP and then transferred to the acceptor end of tRNA(Ala). Also edits incorrectly charged Ser-tRNA(Ala) and Gly-tRNA(Ala) via its editing domain. In Streptococcus agalactiae serotype V (strain ATCC BAA-611 / 2603 V/R), this protein is Alanine--tRNA ligase.